The primary structure comprises 537 residues: Cytoplasmic dynein 2 intermediate chain 2 (537 aa).

Ser-15 is subject to Phosphoserine. A DYNLL2 binding region spans residues 80-93; it reads RTHADAQVQTEAPE. Residues 107–132 are DYNLRB1 binding; sequence LRLEAFLRRVEAMVIRELNNNWQSHA. WD repeat units follow at residues 216-256, 265-309, 391-431, 434-474, and 481-521; these read EVPS…DPLL, THTD…QLRL, PHGG…PLTS, LSHK…QKPT, and QDGS…TEQG.

It belongs to the dynein light intermediate chain family. As to quaternary structure, the cytoplasmic dynein 2 complex consists of two catalytic heavy chains (HCs) and a number of non-catalytic subunits presented by intermediate chains (ICs), light intermediate chains (LICs) and light chains (LCs). Among them, a heavy chain (DYNC2H1), two intermediate chains (DYNC2I2 and DYNC2I1), a light intermediate chain (DYNC2LI1), and a light chain (DYNLT2B) are unique to the cytoplasmic dynein complex 2, but a subset of the light chains are also shared by dynein-1 and dynein-2 complexes. Interacts with DYNC2I1; their C-terminal domains each bind a copy of the heavy chain, and their extended N-terminal regions are held together by an array of light chain dimers. Interacts with DYNLL2; this interaction is essential for dynein-2-mediated retrograde trafficking of ciliary proteins. Interacts with DYNLRB1; this interaction is essential for dynein-2-mediated retrograde trafficking of ciliary proteins. Interacts (via the WD domains) with MAP3K7 and TAB3. Interacts (via WD domains) with TAB2 (via C-terminus). Interacts (via WD domains) with TRAF6 (via TRAF-type domains). As to expression, expressed in brain, thymus, heart, lung, liver, spleen, kidney, testis and intestine.

Its subcellular location is the cytoplasm. The protein localises to the cytoskeleton. It is found in the cilium basal body. The protein resides in the cilium axoneme. It localises to the cell projection. Its subcellular location is the cilium. The protein localises to the microtubule organizing center. It is found in the centrosome. The protein resides in the filopodium. Functionally, acts as one of several non-catalytic accessory components of the cytoplasmic dynein 2 complex (dynein-2 complex), a motor protein complex that drives the movement of cargos along microtubules within cilia and flagella in concert with the intraflagellar transport (IFT) system. DYNC2I2 plays a major role in retrograde ciliary protein trafficking and in ciliogenesis. Required also to maintain a functional transition zone. Acts as a negative regulator of the Toll-like and IL-1R receptor signaling pathways. Inhibits the MAP3K7-induced NF-kappa-B activation pathway. Inhibits MAP3K7 phosphorylation at 'Thr-184' and 'Thr-187' upon Il-1 beta stimulation. The protein is Cytoplasmic dynein 2 intermediate chain 2 (Dync2i2) of Mus musculus (Mouse).